A 772-amino-acid chain; its full sequence is uncharacterized protein (772 aa).

Helical transmembrane passes span 16–36 (LITF…LFSY) and 301–321 (IGWI…LFSW). The 99-residue stretch at 670–768 (DNIIHIIHHE…GITPGNYRQQ (99 aa)) folds into the HTH araC/xylS-type domain. DNA-binding regions (H-T-H motif) lie at residues 687–708 (DEIA…KKEM) and 735–758 (VKDI…KKLE).

The protein localises to the cell membrane. This is an uncharacterized protein from Bacillus subtilis (strain 168).